The following is a 97-amino-acid chain: Mitochondrial import inner membrane translocase subunit Tim8 A (97 aa).

Positions 43–66 match the Twin CX3C motif motif; sequence CWEKCMDKPGPKLDSRAEACFVNC. 2 cysteine pairs are disulfide-bonded: Cys-43–Cys-66 and Cys-47–Cys-62. Ser-57, Ser-87, Ser-94, and Ser-96 each carry phosphoserine.

It belongs to the small Tim family. Heterohexamer; composed of 3 copies of TIMM8A and 3 copies of TIMM13, named soluble 70 kDa complex. Associates with the TIM22 complex, whose core is composed of TIMM22.

It is found in the mitochondrion inner membrane. Functionally, mitochondrial intermembrane chaperone that participates in the import and insertion of some multi-pass transmembrane proteins into the mitochondrial inner membrane. Also required for the transfer of beta-barrel precursors from the TOM complex to the sorting and assembly machinery (SAM complex) of the outer membrane. Acts as a chaperone-like protein that protects the hydrophobic precursors from aggregation and guide them through the mitochondrial intermembrane space. The TIMM8-TIMM13 complex mediates the import of proteins such as TIMM23, SLC25A12/ARALAR1 and SLC25A13/ARALAR2, while the predominant TIMM9-TIMM10 70 kDa complex mediates the import of much more proteins. The protein is Mitochondrial import inner membrane translocase subunit Tim8 A (Timm8a) of Rattus norvegicus (Rat).